We begin with the raw amino-acid sequence, 583 residues long: Complement factor I (583 aa).

Positions 1–18 are cleaved as a signal peptide; that stretch reads MKLLHVFLLFLCFHLSFC. Cystine bridges form between Cys33-Cys255, Cys43-Cys54, Cys48-Cys59, Cys61-Cys93, Cys67-Cys86, Cys75-Cys106, Cys141-Cys181, Cys154-Cys214, Cys186-Cys196, Cys229-Cys247, Cys259-Cys271, Cys266-Cys284, Cys278-Cys293, Cys327-Cys453, Cys365-Cys381, and Cys373-Cys444. Positions 55 to 108 constitute a Kazal-like domain; it reads IEGTCICKLPYQCPKNGTTVCATNGRSFPTYCQQKSLECLRPGTKFLNNGTCTA. Residues Asn70, Asn103, Asn173, and Asn177 are each glycosylated (N-linked (GlcNAc...) asparagine). Residues 114–212 enclose the SRCR domain; that stretch reads VSLKHGNTDS…TMGYQDLADV (99 aa). LDL-receptor class A domains lie at 213–257 and 258–294; these read VCYT…LCCK and ACQG…VGCE. Lys239, Asp242, Ile244, Asp246, Asp252, and Glu253 together coordinate Ca(2+). Residues Tyr276, Asn279, Glu281, Asp283, Asp289, and Glu290 each coordinate Ca(2+). Positions 340 to 574 constitute a Peptidase S1 domain; sequence IVGGKRAQLG…YFDWISYHVG (235 aa). Active-site charge relay system residues include His380 and Asp429. N-linked (GlcNAc...) asparagine glycans are attached at residues Asn464 and Asn494. Intrachain disulfides connect Cys467–Cys531, Cys495–Cys510, and Cys521–Cys550. The Charge relay system role is filled by Ser525. A glycan (N-linked (GlcNAc...) asparagine) is linked at Asn536.

The protein belongs to the peptidase S1 family. Heterodimer of a light and heavy chains; disulfide-linked. The fully processed and mature protein circulates as a zymogen, and is allosterically activated by substrate-induced remodeling of the active site. In terms of tissue distribution, plasma.

The protein localises to the secreted. It is found in the extracellular space. It carries out the reaction Inactivates complement subcomponents C3b, iC3b and C4b by proteolytic cleavage.. Functionally, responsible for cleaving the alpha-chains of C4b and C3b in the presence of the cofactors C4-binding protein and factor H respectively. The chain is Complement factor I (CFI) from Pongo abelii (Sumatran orangutan).